A 361-amino-acid polypeptide reads, in one-letter code: Cell cycle control protein 50A (361 aa).

The disordered stretch occupies residues 1-28 (MAMNYNAKDEVDGGPPCPPGGTAKTRRP). A2 is subject to N-acetylalanine. A required for ATPase and aminophospholipid flippase activity region spans residues 2–48 (AMNYNAKDEVDGGPPCPPGGTAKTRRPDNTAFKQQRLPAWQPILTAG). Residues 2 to 49 (AMNYNAKDEVDGGPPCPPGGTAKTRRPDNTAFKQQRLPAWQPILTAGT) are Cytoplasmic-facing. The interval 49–348 (TVLPTFFIIG…LGVVLLVINH (300 aa)) is interaction with ATP8A2. Residues 50-70 (VLPTFFIIGLIFIPIGIGIFV) form a helical membrane-spanning segment. Over 71–325 (TSNNIREIEI…SWMGGKNPFL (255 aa)) the chain is Exoplasmic loop. 3 cysteine pairs are disulfide-bonded: C91/C104, C94/C102, and C157/C171. N-linked (GlcNAc...) asparagine glycans are attached at residues N180, N190, and N294. Residues 326–346 (GIAYITIGSISFLLGVVLLVI) form a helical membrane-spanning segment. At 347–361 (NHKYRNSSNTADITI) the chain is on the cytoplasmic side.

Belongs to the CDC50/LEM3 family. In terms of assembly, component of various P4-ATPase flippase complexes which consists of a catalytic alpha subunit and an accessory beta subunit. Interacts with ATP8A1 to form a flippase complex; this complex forms an intermediate phosphoenzyme. Interacts with ATP8A2 to form a flippase complex. ATP8B1:TMEM30A and ATP8B2:TMEM30A flippase complexes have been shown to form intermediate phosphoenzymes in vitro. Interacts with alpha subunits ATP8A1, ATP8B1, ATP8B2, ATP8B4, ATP10A, ATP10B, ATP10D, ATP11A, ATP11B and ATP11C. N-glycosylated; contributes to ATP8A2:TMEM30A flippase complex assembly but not to functional activity. Expressed in photoreceptor cells; detected in retina outer segment and other retinal layers (at protein level).

It localises to the membrane. Its subcellular location is the golgi apparatus. The protein resides in the cytoplasmic vesicle. It is found in the secretory vesicle membrane. The protein localises to the apical cell membrane. It localises to the photoreceptor inner segment. Its subcellular location is the cell projection. The protein resides in the cilium. It is found in the photoreceptor outer segment. Accessory component of a P4-ATPase flippase complex which catalyzes the hydrolysis of ATP coupled to the transport of aminophospholipids from the outer to the inner leaflet of various membranes and ensures the maintenance of asymmetric distribution of phospholipids. Phospholipid translocation also seems to be implicated in vesicle formation and in uptake of lipid signaling molecules. The beta subunit may assist in binding of the phospholipid substrate. Required for the proper folding, assembly and ER to Golgi exit of the ATP8A2:TMEM30A flippase complex. ATP8A2:TMEM30A may be involved in regulation of neurite outgrowth, and, reconstituted to liposomes, predomiminantly transports phosphatidylserine (PS) and to a lesser extent phosphatidylethanolamine (PE). The ATP8A1:TMEM30A flippase complex seems to play a role in regulation of cell migration probably involving flippase-mediated translocation of phosphatidylethanolamine (PE) at the plasma membrane. Required for the formation of the ATP8A2, ATP8B1 and ATP8B2 P-type ATPAse intermediate phosphoenzymes. Involved in uptake of platelet-activating factor (PAF). Can also mediate the export of alpha subunits ATP8A1, ATP8B1, ATP8B2, ATP8B4, ATP10A, ATP10B, ATP10D, ATP11A, ATP11B and ATP11C from the ER to other membrane localizations. This is Cell cycle control protein 50A from Bos taurus (Bovine).